The chain runs to 213 residues: Protein RCR1 (213 aa).

The Lumenal portion of the chain corresponds to 1-39 (MGLISYENEAINEVKKADNHHVSKFVTSYYGPSSSSWQS). The helical transmembrane segment at 40–62 (GIWILFVLFVAAVILIILFTFVA) threads the bilayer. Over 63–213 (NRRRRRMGRA…PERAKVNARS (151 aa)) the chain is Cytoplasmic. A PY motif motif is present at residues 104–107 (VPEY). The tract at residues 190 to 213 (ERLPGGTTTQEINPPERAKVNARS) is disordered. A compositionally biased stretch (basic and acidic residues) spans 203-213 (PPERAKVNARS).

As to quaternary structure, interacts with PMT4 and WW domain of RSP5.

The protein resides in the endoplasmic reticulum membrane. In terms of biological role, regulates chitin deposition in the cell wall. The chain is Protein RCR1 (RCR1) from Saccharomyces cerevisiae (strain ATCC 204508 / S288c) (Baker's yeast).